The primary structure comprises 80 residues: Acyl carrier protein (80 aa).

The Carrier domain occupies 4–79; sequence EAILEKVRSI…DAVKYIEDKQ (76 aa). Ser-39 bears the O-(pantetheine 4'-phosphoryl)serine mark.

It belongs to the acyl carrier protein (ACP) family. In terms of processing, 4'-phosphopantetheine is transferred from CoA to a specific serine of apo-ACP by AcpS. This modification is essential for activity because fatty acids are bound in thioester linkage to the sulfhydryl of the prosthetic group.

It is found in the cytoplasm. It functions in the pathway lipid metabolism; fatty acid biosynthesis. Carrier of the growing fatty acid chain in fatty acid biosynthesis. This chain is Acyl carrier protein, found in Synechococcus sp. (strain CC9902).